We begin with the raw amino-acid sequence, 247 residues long: uncharacterized protein (247 aa).

This is an uncharacterized protein from Archaeoglobus fulgidus (strain ATCC 49558 / DSM 4304 / JCM 9628 / NBRC 100126 / VC-16).